Reading from the N-terminus, the 214-residue chain is uncharacterized protein (214 aa).

An N-terminal signal peptide occupies residues 1–17 (MLKKIIILFLGVFVLSG). A lipid anchor (N-palmitoyl cysteine) is attached at Cys-18. A lipid anchor (S-diacylglycerol cysteine) is attached at Cys-18. Acidic residues predominate over residues 64–77 (DNLDDPEDDDDDYD). Disordered stretches follow at residues 64–83 (DNLD…LRGE), 106–138 (YKAE…KERK), and 166–197 (TANQ…SKVK). A coiled-coil region spans residues 120 to 162 (TLSKANKKVRKDNTDKERKMQEELDQIKAMLRETKRDISKYTC).

It localises to the cell membrane. This is an uncharacterized protein from Rickettsia bellii (strain RML369-C).